Consider the following 255-residue polypeptide: 3-dehydroquinate dehydratase (255 aa).

Residues 47-49 (EWR) and Arg-83 each bind 3-dehydroquinate. The Proton donor/acceptor role is filled by His-144. Residue Lys-171 is the Schiff-base intermediate with substrate of the active site. 3-dehydroquinate-binding residues include Arg-214, Ser-233, and Gln-237.

This sequence belongs to the type-I 3-dehydroquinase family. As to quaternary structure, homodimer or homotetramer.

It carries out the reaction 3-dehydroquinate = 3-dehydroshikimate + H2O. It participates in metabolic intermediate biosynthesis; chorismate biosynthesis; chorismate from D-erythrose 4-phosphate and phosphoenolpyruvate: step 3/7. Its function is as follows. Involved in the third step of the chorismate pathway, which leads to the biosynthesis of aromatic amino acids. Catalyzes the cis-dehydration of 3-dehydroquinate (DHQ) and introduces the first double bond of the aromatic ring to yield 3-dehydroshikimate. The reaction involves the formation of an imine intermediate between the keto group of 3-dehydroquinate and the epsilon-amino group of Lys-170 at the active site. In Clostridioides difficile (strain 630) (Peptoclostridium difficile), this protein is 3-dehydroquinate dehydratase.